The sequence spans 84 residues: Sulfur carrier protein TusA (84 aa).

The active-site Cysteine persulfide intermediate is Cys-21.

It belongs to the sulfur carrier protein TusA family.

It is found in the cytoplasm. Functionally, sulfur carrier protein which probably makes part of a sulfur-relay system. The sequence is that of Sulfur carrier protein TusA from Pseudomonas savastanoi pv. phaseolicola (strain 1448A / Race 6) (Pseudomonas syringae pv. phaseolicola (strain 1448A / Race 6)).